The primary structure comprises 87 residues: UPF0473 protein Daud_0916 (87 aa).

It belongs to the UPF0473 family.

The chain is UPF0473 protein Daud_0916 from Desulforudis audaxviator (strain MP104C).